The chain runs to 69 residues: UPF0150 protein Ta0767 (69 aa).

This sequence belongs to the UPF0150 family.

This Thermoplasma acidophilum (strain ATCC 25905 / DSM 1728 / JCM 9062 / NBRC 15155 / AMRC-C165) protein is UPF0150 protein Ta0767.